Here is a 557-residue protein sequence, read N- to C-terminus: Formate--tetrahydrofolate ligase (557 aa).

66-73 contacts ATP; that stretch reads TPAGEGKS.

It belongs to the formate--tetrahydrofolate ligase family.

It catalyses the reaction (6S)-5,6,7,8-tetrahydrofolate + formate + ATP = (6R)-10-formyltetrahydrofolate + ADP + phosphate. It participates in one-carbon metabolism; tetrahydrofolate interconversion. This is Formate--tetrahydrofolate ligase from Lactobacillus johnsonii (strain CNCM I-12250 / La1 / NCC 533).